Here is a 299-residue protein sequence, read N- to C-terminus: Porphobilinogen deaminase (299 aa).

Cys242 is subject to S-(dipyrrolylmethanemethyl)cysteine.

This sequence belongs to the HMBS family. As to quaternary structure, monomer. The cofactor is dipyrromethane.

The catalysed reaction is 4 porphobilinogen + H2O = hydroxymethylbilane + 4 NH4(+). It participates in porphyrin-containing compound metabolism; protoporphyrin-IX biosynthesis; coproporphyrinogen-III from 5-aminolevulinate: step 2/4. Functionally, tetrapolymerization of the monopyrrole PBG into the hydroxymethylbilane pre-uroporphyrinogen in several discrete steps. This chain is Porphobilinogen deaminase (hemC), found in Rickettsia prowazekii (strain Madrid E).